The chain runs to 576 residues: Adenine deaminase 2 (576 aa).

Belongs to the metallo-dependent hydrolases superfamily. Adenine deaminase family. It depends on Mn(2+) as a cofactor.

It catalyses the reaction adenine + H2O + H(+) = hypoxanthine + NH4(+). This chain is Adenine deaminase 2, found in Desulfotalea psychrophila (strain LSv54 / DSM 12343).